The following is a 657-amino-acid chain: Glycogen debranching enzyme (657 aa).

Catalysis depends on Asp336, which acts as the Nucleophile. Glu371 serves as the catalytic Proton donor. Positions 460–479 are disordered; sequence ANGEENRDGTNNNYSNNHGK.

It belongs to the glycosyl hydrolase 13 family.

The catalysed reaction is Hydrolysis of (1-&gt;6)-alpha-D-glucosidic linkages to branches with degrees of polymerization of three or four glucose residues in limit dextrin.. The protein operates within glycan degradation; glycogen degradation. In terms of biological role, removes maltotriose and maltotetraose chains that are attached by 1,6-alpha-linkage to the limit dextrin main chain, generating a debranched limit dextrin. This is Glycogen debranching enzyme from Escherichia coli (strain UTI89 / UPEC).